The chain runs to 204 residues: Large ribosomal subunit protein uL4 (204 aa).

The interval 47 to 69 (KAQKTRAEVSGGGKKPWRQKGTG) is disordered.

The protein belongs to the universal ribosomal protein uL4 family. In terms of assembly, part of the 50S ribosomal subunit.

Functionally, one of the primary rRNA binding proteins, this protein initially binds near the 5'-end of the 23S rRNA. It is important during the early stages of 50S assembly. It makes multiple contacts with different domains of the 23S rRNA in the assembled 50S subunit and ribosome. Forms part of the polypeptide exit tunnel. This is Large ribosomal subunit protein uL4 from Cellvibrio japonicus (strain Ueda107) (Pseudomonas fluorescens subsp. cellulosa).